The primary structure comprises 132 residues: Large ribosomal subunit protein bL17 (132 aa).

It belongs to the bacterial ribosomal protein bL17 family. In terms of assembly, part of the 50S ribosomal subunit. Contacts protein L32.

In Variovorax paradoxus (strain S110), this protein is Large ribosomal subunit protein bL17.